A 182-amino-acid polypeptide reads, in one-letter code: ATP-dependent protease subunit HslV (182 aa).

Thr-12 is an active-site residue. 3 residues coordinate Na(+): Ala-167, Cys-170, and Thr-173.

Belongs to the peptidase T1B family. HslV subfamily. A double ring-shaped homohexamer of HslV is capped on each side by a ring-shaped HslU homohexamer. The assembly of the HslU/HslV complex is dependent on binding of ATP.

The protein localises to the cytoplasm. The enzyme catalyses ATP-dependent cleavage of peptide bonds with broad specificity.. Allosterically activated by HslU binding. Functionally, protease subunit of a proteasome-like degradation complex believed to be a general protein degrading machinery. The sequence is that of ATP-dependent protease subunit HslV from Prosthecochloris aestuarii (strain DSM 271 / SK 413).